The chain runs to 165 residues: Ubiquitin-conjugating enzyme E2 G2 (165 aa).

Ala2 bears the N-acetylalanine mark. One can recognise a UBC core domain in the interval 4-164 (TALKRLMAEY…AKQIVQKSLG (161 aa)). The active-site Glycyl thioester intermediate is Cys89.

It belongs to the ubiquitin-conjugating enzyme family. In terms of assembly, interacts with AUP1 (via C-terminus); the interaction recruits UBE2G2 to lipid droplets. Interacts with ubiquitin ligases AMFR/gp78 and RNF139/TRC8; recruitment to lipid droplets by AUP1 facilitates interaction of UBE2G2 with AMFR and RNF139, leading to sterol-induced ubiquitination of 3-hydroxy-3-methylglutaryl coenzyme A reductase and its subsequent proteasomal degradation.

The protein resides in the endoplasmic reticulum. The protein localises to the lipid droplet. The enzyme catalyses S-ubiquitinyl-[E1 ubiquitin-activating enzyme]-L-cysteine + [E2 ubiquitin-conjugating enzyme]-L-cysteine = [E1 ubiquitin-activating enzyme]-L-cysteine + S-ubiquitinyl-[E2 ubiquitin-conjugating enzyme]-L-cysteine.. The protein operates within protein modification; protein ubiquitination. Functionally, accepts ubiquitin from the E1 complex and catalyzes its covalent attachment to other proteins. In vitro catalyzes 'Lys-48'-linked polyubiquitination. Involved in endoplasmic reticulum-associated degradation (ERAD). Required for sterol-induced ubiquitination of 3-hydroxy-3-methylglutaryl coenzyme A reductase and its subsequent proteasomal degradation. This chain is Ubiquitin-conjugating enzyme E2 G2, found in Bos taurus (Bovine).